Consider the following 193-residue polypeptide: Putative 3-methyladenine DNA glycosylase (193 aa).

It belongs to the DNA glycosylase MPG family.

The sequence is that of Putative 3-methyladenine DNA glycosylase from Agrobacterium fabrum (strain C58 / ATCC 33970) (Agrobacterium tumefaciens (strain C58)).